A 312-amino-acid chain; its full sequence is Ribosomal RNA small subunit methyltransferase H (312 aa).

S-adenosyl-L-methionine contacts are provided by residues 34–36, Asp54, Phe81, Asp102, and Gln109; that span reads AGH.

This sequence belongs to the methyltransferase superfamily. RsmH family.

It is found in the cytoplasm. It catalyses the reaction cytidine(1402) in 16S rRNA + S-adenosyl-L-methionine = N(4)-methylcytidine(1402) in 16S rRNA + S-adenosyl-L-homocysteine + H(+). Its function is as follows. Specifically methylates the N4 position of cytidine in position 1402 (C1402) of 16S rRNA. In Citrifermentans bemidjiense (strain ATCC BAA-1014 / DSM 16622 / JCM 12645 / Bem) (Geobacter bemidjiensis), this protein is Ribosomal RNA small subunit methyltransferase H.